We begin with the raw amino-acid sequence, 688 residues long: Protein sel-1 homolog 2 (688 aa).

Positions 1-23 are cleaved as a signal peptide; that stretch reads MKPLSLLIEILIILGVTIKTIKA. The Extracellular segment spans residues 24-662; it reads EEHNKRQKER…RWNWLKLDNT (639 aa). The N-linked (GlcNAc...) asparagine glycan is linked to asparagine 34. 11 Sel1-like repeats span residues 107–142, 143–178, 179–214, 215–250, 297–333, 334–370, 371–406, 407–442, 443–478, 551–586, and 588–623; these read GDQL…DMGN, LKAM…KEGS, CKAQ…AGGN, MMSQ…DYIA, VQIQ…KAGS, ANAM…SKGN, AIGL…EKGW, PDAQ…QSGQ, PLAI…ELGH, AFAR…NKYH, and AQAM…QTSP. The chain crosses the membrane as a helical span at residues 663–683; it reads IGPHWDLFVIGLIVPGLILLL. Residues 684–688 are Cytoplasmic-facing; that stretch reads RNHHG.

Belongs to the sel-1 family.

It localises to the membrane. The protein resides in the cell projection. The protein localises to the cilium. It is found in the nucleus speckle. The polypeptide is Protein sel-1 homolog 2 (SEL1L2) (Homo sapiens (Human)).